The sequence spans 549 residues: E-selectin (549 aa).

Residues 1–21 form the signal peptide; the sequence is MNASCFLSALTFVLLIGKSIA. The 118-residue stretch at 22-139 folds into the C-type lectin domain; sequence WYYNASSELM…CDKKKLALCY (118 aa). Residues 22-494 are Extracellular-facing; it reads WYYNASSELM…CEAPANPPRP (473 aa). N-linked (GlcNAc...) asparagine glycans are attached at residues N25 and N60. Intrachain disulfides connect C40/C138, C111/C130, C143/C154, C148/C163, C165/C174, C180/C225, C193/C206, C210/C238, C243/C287, C256/C269, C273/C300, C305/C350, C336/C363, C368/C413, C399/C426, C431/C472, and C458/C485. Ca(2+)-binding residues include E101, N103, and E109. A carbohydrate-binding positions include 101–109, 113–118, and 126–128; these read EPNNKQRNE, EIYIQR, and NDE. 2 residues coordinate Ca(2+): N126 and D127. Residues 140 to 175 enclose the EGF-like domain; that stretch reads TASCTNTSCSGHGECVETINSYTCKCHPGFLGPKCD. Residue N145 is glycosylated (N-linked (GlcNAc...) asparagine). 5 Sushi domains span residues 178–240, 241–302, 303–365, 366–428, and 429–487; these read VTCQ…ACHV, VECK…SCKA, VTCD…VCKA, SQCE…TCAG, and VQCS…TCEA. Residues N192 and N203 are each glycosylated (N-linked (GlcNAc...) asparagine). Residue N266 is glycosylated (N-linked (GlcNAc...) asparagine). N-linked (GlcNAc...) asparagine glycans are attached at residues N313, N320, and N333. N-linked (GlcNAc...) asparagine glycans are attached at residues N441 and N465. Residues 495–516 form a helical membrane-spanning segment; sequence LVVALSVAATSLLTLSSLIYVL. The Cytoplasmic segment spans residues 517 to 549; that stretch reads KRFFWKKAKKFVPASSCQSLQSFENYQGPSYII.

It belongs to the selectin/LECAM family. As to quaternary structure, interacts with SELPLG/PSGL1 and PODXL2 through the sialyl Lewis X epitope. SELPLG sulfation appears not to be required for this interaction.

Its subcellular location is the cell membrane. Its function is as follows. Cell-surface glycoprotein having a role in immunoadhesion. Mediates in the adhesion of blood neutrophils in cytokine-activated endothelium through interaction with SELPLG/PSGL1. May have a role in capillary morphogenesis. This chain is E-selectin (Sele), found in Rattus norvegicus (Rat).